A 278-amino-acid polypeptide reads, in one-letter code: Fasciclin-like arabinogalactan protein 5 (278 aa).

The N-terminal stretch at 1 to 24 (MGLKASLSLLSLTILLVFSKVVTA) is a signal peptide. The FAS1 domain maps to 25 to 169 (NNITLAFQKY…LSIIQITMPI (145 aa)). Asn-26, Asn-74, Asn-126, and Asn-159 each carry an N-linked (GlcNAc...) asparagine glycan. Residues 199–257 (VVPAPGPAADDNSPDSAVPKTPPAPATDTPEADSPAPAPSADNEKIEAADKAKPSSSAS) are disordered. A compositionally biased stretch (low complexity) spans 224–239 (ATDTPEADSPAPAPSA). Residues 240–251 (DNEKIEAADKAK) show a composition bias toward basic and acidic residues. Ser-255 carries the GPI-anchor amidated serine lipid modification. Positions 256–278 (ASKAGWSFDVILLLAFLASFAGF) are cleaved as a propeptide — removed in mature form.

Belongs to the fasciclin-like AGP family.

It is found in the cell membrane. May be a cell surface adhesion protein. This Arabidopsis thaliana (Mouse-ear cress) protein is Fasciclin-like arabinogalactan protein 5 (FLA5).